A 278-amino-acid polypeptide reads, in one-letter code: MSVPTVLENILARKFQEVAERSARVSLSELESLAKAADAPRGFAQALLAQAKKKQPAVIAEIKKASPSKGVIRENFVPADIAKSYEKGGATCLSVLTDIDYFQGADAYLQQARVACSLPVIRKDFMIDPYQIVEARALGADCVLLIVSALDDVKMAELASVAKDVGLDVLVEVHDGDELERALKTLDTPLVGVNNRNLHTFDVSLETTLDLLPRIPRDRLVITESGILNRADVELMEISDVYAFLVGEAFMRAENPGIELQRLFFPERGVPVSGSTLD.

The protein belongs to the TrpC family.

It catalyses the reaction 1-(2-carboxyphenylamino)-1-deoxy-D-ribulose 5-phosphate + H(+) = (1S,2R)-1-C-(indol-3-yl)glycerol 3-phosphate + CO2 + H2O. Its pathway is amino-acid biosynthesis; L-tryptophan biosynthesis; L-tryptophan from chorismate: step 4/5. The protein is Indole-3-glycerol phosphate synthase of Pseudomonas fluorescens (strain Pf0-1).